We begin with the raw amino-acid sequence, 439 residues long: 3-phosphoshikimate 1-carboxyvinyltransferase (439 aa).

Positions 21, 22, and 26 each coordinate 3-phosphoshikimate. Position 21 (Lys-21) interacts with phosphoenolpyruvate. Positions 94 and 122 each coordinate phosphoenolpyruvate. Residues Ser-167, Gln-169, Asp-320, and Lys-347 each coordinate 3-phosphoshikimate. Residue Gln-169 participates in phosphoenolpyruvate binding. The active-site Proton acceptor is Asp-320. The phosphoenolpyruvate site is built by Arg-351 and Arg-395.

It belongs to the EPSP synthase family. As to quaternary structure, monomer.

It is found in the cytoplasm. The catalysed reaction is 3-phosphoshikimate + phosphoenolpyruvate = 5-O-(1-carboxyvinyl)-3-phosphoshikimate + phosphate. The protein operates within metabolic intermediate biosynthesis; chorismate biosynthesis; chorismate from D-erythrose 4-phosphate and phosphoenolpyruvate: step 6/7. Functionally, catalyzes the transfer of the enolpyruvyl moiety of phosphoenolpyruvate (PEP) to the 5-hydroxyl of shikimate-3-phosphate (S3P) to produce enolpyruvyl shikimate-3-phosphate and inorganic phosphate. The sequence is that of 3-phosphoshikimate 1-carboxyvinyltransferase from Hyphomonas neptunium (strain ATCC 15444).